The primary structure comprises 198 residues: Nicotinamidase 3 (198 aa).

It belongs to the isochorismatase family.

It carries out the reaction nicotinamide + H2O = nicotinate + NH4(+). Its pathway is cofactor biosynthesis; nicotinate biosynthesis; nicotinate from nicotinamide: step 1/1. Functionally, catalyzes the deamidation of nicotinamide, an early step in the NAD(+) salvage pathway. Prevents the accumulation of intracellular nicotinamide, a known inhibitor of poly(ADP-ribose) polymerases (PARP enzymes). The protein is Nicotinamidase 3 of Arabidopsis thaliana (Mouse-ear cress).